A 138-amino-acid polypeptide reads, in one-letter code: Acidic phospholipase A2 Cvv-E6a (138 aa).

Residues 1–16 (MRTLWIVAVLLLGVEG) form the signal peptide. Intrachain disulfides connect Cys-42–Cys-131, Cys-44–Cys-60, Cys-59–Cys-111, Cys-65–Cys-138, Cys-66–Cys-104, Cys-73–Cys-97, and Cys-91–Cys-102. Residues Tyr-43, Gly-45, and Gly-47 each contribute to the Ca(2+) site. His-63 is a catalytic residue. Residue Asp-64 participates in Ca(2+) binding. Asp-105 is an active-site residue.

Belongs to the phospholipase A2 family. Group II subfamily. D49 sub-subfamily. Requires Ca(2+) as cofactor. As to expression, expressed by the venom gland.

The protein resides in the secreted. It carries out the reaction a 1,2-diacyl-sn-glycero-3-phosphocholine + H2O = a 1-acyl-sn-glycero-3-phosphocholine + a fatty acid + H(+). Snake venom phospholipase A2 (PLA2) that significantly inhibits ADP-induced platelet aggregation in platelet-rich plasma of human, rabbit and guinea pig. PLA2 catalyzes the calcium-dependent hydrolysis of the 2-acyl groups in 3-sn-phosphoglycerides. This is Acidic phospholipase A2 Cvv-E6a from Crotalus viridis viridis (Prairie rattlesnake).